Reading from the N-terminus, the 728-residue chain is Catalase-peroxidase (728 aa).

Positions 91-218 (WHSAGTYRTA…LAAVQMGLIY (128 aa)) form a cross-link, tryptophyl-tyrosyl-methioninium (Trp-Tyr) (with M-244). Catalysis depends on His-92, which acts as the Proton acceptor. Positions 218-244 (YVNPEGPDGNPDPVAAARDIRDTFARM) form a cross-link, tryptophyl-tyrosyl-methioninium (Tyr-Met) (with W-91). Position 259 (His-259) interacts with heme b.

The protein belongs to the peroxidase family. Peroxidase/catalase subfamily. Homodimer or homotetramer. Requires heme b as cofactor. In terms of processing, formation of the three residue Trp-Tyr-Met cross-link is important for the catalase, but not the peroxidase activity of the enzyme.

The catalysed reaction is H2O2 + AH2 = A + 2 H2O. It carries out the reaction 2 H2O2 = O2 + 2 H2O. Bifunctional enzyme with both catalase and broad-spectrum peroxidase activity. In Burkholderia mallei (strain NCTC 10247), this protein is Catalase-peroxidase.